The following is a 134-amino-acid chain: Profilin-2 (134 aa).

A disulfide bridge connects residues C13 and C118. The Involved in PIP2 interaction signature appears at 84-100; that stretch reads AVIRGKKGSGGITIKKT. The residue at position 114 (T114) is a Phosphothreonine.

This sequence belongs to the profilin family. Post-translationally, phosphorylated by MAP kinases.

Its subcellular location is the cytoplasm. It localises to the cytoskeleton. This is Profilin-2 from Olea europaea (Common olive).